The following is a 284-amino-acid chain: Isopentenyl-diphosphate Delta-isomerase II, chloroplastic (284 aa).

The transit peptide at 1–45 (MSASSLFNLPLIRLRSLALSSSFSSFRFAHRPLSSISPRKLPNFR) directs the protein to the chloroplast. Ala46 carries the N-acetylalanine modification. Lys88 contributes to the substrate binding site. Residues His92 and His104 each contribute to the Mg(2+) site. A Nudix hydrolase domain is found at 102 to 254 (LLHRAFSVFL…GLKLSPWFRL (153 aa)). Substrate is bound by residues Arg123 and Lys127. Cys139 is an active-site residue. Substrate is bound at residue Ser140. The Nudix box motif lies at 140-170 (SHPLYRESELIQDNALGVRNAAQRKLLDELG). 2 residues coordinate Mg(2+): Glu199 and Glu201. Glu201 is a catalytic residue.

Belongs to the IPP isomerase type 1 family. Mg(2+) serves as cofactor.

The protein localises to the plastid. Its subcellular location is the chloroplast. The catalysed reaction is isopentenyl diphosphate = dimethylallyl diphosphate. It functions in the pathway isoprenoid biosynthesis; dimethylallyl diphosphate biosynthesis; dimethylallyl diphosphate from isopentenyl diphosphate: step 1/1. The protein operates within porphyrin-containing compound metabolism; chlorophyll biosynthesis. In terms of biological role, catalyzes the 1,3-allylic rearrangement of the homoallylic substrate isopentenyl (IPP) to its highly electrophilic allylic isomer, dimethylallyl diphosphate (DMAPP). The chain is Isopentenyl-diphosphate Delta-isomerase II, chloroplastic (IPP2) from Arabidopsis thaliana (Mouse-ear cress).